The primary structure comprises 122 residues: Large ribosomal subunit protein uL14 (122 aa).

Belongs to the universal ribosomal protein uL14 family. As to quaternary structure, part of the 50S ribosomal subunit. Forms a cluster with proteins L3 and L19. In the 70S ribosome, L14 and L19 interact and together make contacts with the 16S rRNA in bridges B5 and B8.

Functionally, binds to 23S rRNA. Forms part of two intersubunit bridges in the 70S ribosome. The sequence is that of Large ribosomal subunit protein uL14 from Chlamydia trachomatis serovar L2 (strain ATCC VR-902B / DSM 19102 / 434/Bu).